The primary structure comprises 216 residues: Pentapeptide repeat protein VPA0095 (216 aa).

The protein belongs to the pentapeptide repeat protein family.

Has no effect when overexpressed in E.coli. When Cys-115 is mutated to Tyr and overexpressed it increases (fluoro)quinolone resistance in E.coli up to 16-fold for ciprofloxacin, levofloxacin and nalidixic acid. This chain is Pentapeptide repeat protein VPA0095, found in Vibrio parahaemolyticus serotype O3:K6 (strain RIMD 2210633).